The primary structure comprises 406 residues: Tryptophan 2,3-dioxygenase (406 aa).

S19 is subject to Phosphoserine. Residues F72–H76 and R144 contribute to the substrate site. H328 serves as a coordination point for heme. Substrate is bound at residue T342.

It belongs to the tryptophan 2,3-dioxygenase family. In terms of assembly, homotetramer. Dimer of dimers. Heme is required as a cofactor. As to expression, liver.

The catalysed reaction is L-tryptophan + O2 = N-formyl-L-kynurenine. It participates in amino-acid degradation; L-tryptophan degradation via kynurenine pathway; L-kynurenine from L-tryptophan: step 1/2. Functionally, heme-dependent dioxygenase that catalyzes the oxidative cleavage of the L-tryptophan (L-Trp) pyrrole ring and converts L-tryptophan to N-formyl-L-kynurenine. Catalyzes the oxidative cleavage of the indole moiety. The protein is Tryptophan 2,3-dioxygenase of Rattus norvegicus (Rat).